We begin with the raw amino-acid sequence, 123 residues long: Large ribosomal subunit protein uL18 (123 aa).

This sequence belongs to the universal ribosomal protein uL18 family. In terms of assembly, part of the 50S ribosomal subunit; part of the 5S rRNA/L5/L18/L25 subcomplex. Contacts the 5S and 23S rRNAs.

This is one of the proteins that bind and probably mediate the attachment of the 5S RNA into the large ribosomal subunit, where it forms part of the central protuberance. The protein is Large ribosomal subunit protein uL18 of Chlamydia felis (strain Fe/C-56) (Chlamydophila felis).